Consider the following 161-residue polypeptide: Early E3 17.7 kDa glycoprotein (161 aa).

2 N-linked (GlcNAc...) asparagine; by host glycosylation sites follow: asparagine 14 and asparagine 87. Residues 102 to 129 form a helical membrane-spanning segment; sequence IINPAIFLFLHVLTLVIVLAMAAEVIYN.

It is found in the host membrane. The polypeptide is Early E3 17.7 kDa glycoprotein (Murine adenovirus A serotype 1 (MAdV-1)).